The chain runs to 652 residues: MGRRRAPEGGTLGRALIRQQVQRSRSHRHTDSWLHTSELNDGYDWGRLNLQSVTEQSSLDDFLATAELAGTEFVAEKLNIKFVPPEARTGLLSFEENQRIKKLHEENKQFLCIPRRPKWDQKTSPEELKQAEKDNFLEWRRQLVWLEEEQNLILTPFERNLDFWRQLWRVIERSDIVVQIVDARNPLLFRCEDLECYVKTIDDNKENVILINKADLLTAEQRSAWAEFFKKENVKVIFWSALAEAIKLMGNSKGDVNGDTGEAITAEFENSSCDEAEILHKETEHLSLGEAASSEEDESEYEDCQEEEEDWQTCLEDSSSSDEEACGQDCKEGHTVDSEAQGRNTPQKRQIHNFSHLVSKQELLEVFKQLHSGKKVKDGQLTVGLVGYPNVGKSSTINTILGNKKVSVSATPGHTKHFQTLYVEPGLCLCDCPGLVMPSFVSTKAEMICSGILPIDQMRDHVPPVSLVCQNIPRHVLEATYGIDIIKPREDEDPRRPPTSEELLTAYGCMRGFMTAHGQPDQPRSARYILKDYVNGKLLYCHPPPGRDPVTFQYQHQRLLEKKVNGGEIKLQVVRNKKVYQIENVVDKAFFHQENVRALTKGVQAVMGYKPGSGLVTAAAVSSERGAGKPWKKHGNRNKKEKSRRLYKHLDM.

Residue serine 93 is modified to Phosphoserine. The CP-type G domain maps to 164-438; that stretch reads WRQLWRVIER…LCDCPGLVMP (275 aa). 212-215 contacts GTP; the sequence is NKAD. Phosphoserine is present on serine 252. The segment at 288–347 is disordered; sequence LGEAASSEEDESEYEDCQEEEEDWQTCLEDSSSSDEEACGQDCKEGHTVDSEAQGRNTPQ. Residues 293–311 show a composition bias toward acidic residues; the sequence is SSEEDESEYEDCQEEEEDW. GTP contacts are provided by residues 387–394 and 431–434; these read GYPNVGKS and DCPG. A disordered region spans residues 625–652; sequence RGAGKPWKKHGNRNKKEKSRRLYKHLDM. Residues 630–652 show a composition bias toward basic residues; the sequence is PWKKHGNRNKKEKSRRLYKHLDM.

This sequence belongs to the TRAFAC class YlqF/YawG GTPase family. LSG1 subfamily.

The protein resides in the cytoplasm. It is found in the endoplasmic reticulum. Its subcellular location is the nucleus. The protein localises to the cajal body. It catalyses the reaction GTP + H2O = GDP + phosphate + H(+). Functions as a GTPase. May act by mediating the release of NMD3 from the 60S ribosomal subunit after export into the cytoplasm during the 60S ribosomal subunit maturation. This Bos taurus (Bovine) protein is Large subunit GTPase 1 homolog.